Reading from the N-terminus, the 317-residue chain is tRNA(Met) cytidine acetate ligase (317 aa).

Residues 6 to 19 (IAEY…HIYQ), Gly-100, Asn-157, and Arg-182 each bind ATP.

Belongs to the TmcAL family.

It localises to the cytoplasm. It catalyses the reaction cytidine(34) in elongator tRNA(Met) + acetate + ATP = N(4)-acetylcytidine(34) in elongator tRNA(Met) + AMP + diphosphate. Catalyzes the formation of N(4)-acetylcytidine (ac(4)C) at the wobble position of elongator tRNA(Met), using acetate and ATP as substrates. First activates an acetate ion to form acetyladenylate (Ac-AMP) and then transfers the acetyl group to tRNA to form ac(4)C34. The protein is tRNA(Met) cytidine acetate ligase of Mesomycoplasma hyopneumoniae (strain 232) (Mycoplasma hyopneumoniae).